The chain runs to 102 residues: MANEKIRIRLKSYEHSILDESGAKIVDTAKRTGAEISGPVPLPTERTLFTVLRSPHKNKDSREQFEMRTHKRLIDILNPTPKTVDSLMKLDLPSGVDIEIKL.

The protein belongs to the universal ribosomal protein uS10 family. As to quaternary structure, part of the 30S ribosomal subunit.

Its function is as follows. Involved in the binding of tRNA to the ribosomes. This is Small ribosomal subunit protein uS10 from Lactobacillus delbrueckii subsp. bulgaricus (strain ATCC 11842 / DSM 20081 / BCRC 10696 / JCM 1002 / NBRC 13953 / NCIMB 11778 / NCTC 12712 / WDCM 00102 / Lb 14).